The primary structure comprises 2562 residues: Zinc finger homeobox protein 2 (2562 aa).

Positions 1 to 13 are enriched in polar residues; that stretch reads MATLNSASPSGTV. Disordered stretches follow at residues 1 to 88 and 337 to 410; these read MATL…PPKD and PSPP…DPPP. Over residues 56-73 the composition is skewed to basic and acidic residues; that stretch reads GGERLESGSDLDPPKEIG. C2H2-type zinc fingers lie at residues 446–469 and 501–525; these read LKCPKCNWHYKYQQTLDVHMREKH and YRCDVCNYSTTTKGNLSIHMQSDKH. 3 disordered regions span residues 530-559, 603-651, and 669-705; these read QGFQAGPGGQASPPEASLPPTSVGDKEPKT, PPGL…PDKP, and RKFPTAAPGSLSPETHLPPSQLLGSSSDGLPTSPSPD. Residues 609–622 show a composition bias toward pro residues; that stretch reads PGPPPPPGAAPTNP. The segment covering 690–704 has biased composition (polar residues); that stretch reads LLGSSSDGLPTSPSP. C2H2-type zinc fingers lie at residues 752 to 776, 815 to 839, and 864 to 888; these read HRCKLCCYGTQLKANFQLHLKTDKH, LRCNICDFESNSKEKMQLHTRGSAH, and YHCLLCAWDTPSRLALLQHLRTPAH. Residues 923-966 form a disordered region; that stretch reads RLQTPGKASDTPLAQPPTSEKDAQNKTEQQASEVTEDRSGPPRD. The C2H2-type 6 zinc-finger motif lies at 1003-1026; the sequence is YRCPLCQEQLVGRPALHFHLSHLH. 2 disordered regions span residues 1058 to 1126 and 1140 to 1166; these read NPVE…PAPR and MSEEEEGAMGEPRSAEPTPADSRHPLT. 2 stretches are compositionally biased toward pro residues: residues 1091-1101 and 1114-1124; these read SPDPPLEPPLA and DQPPSPAPSPA. C2H2-type zinc fingers lie at residues 1185-1211 and 1242-1266; these read YKCTVCKESFTQKNILLVHYNSVSHLH and FKCTVCRVSYNQSSTLEIHMRSVLH. Over residues 1278–1305 the composition is skewed to basic and acidic residues; the sequence is RAEGAERGQEEFKEGETEGEAGTEKKGP. Positions 1278–1313 are disordered; that stretch reads RAEGAERGQEEFKEGETEGEAGTEKKGPDPGGFMSG. The segment at 1474–1497 adopts a C2H2-type 9 zinc-finger fold; that stretch reads LACGACGKLFSNMLILKTHEEHVH. The tract at residues 1520–1584 is disordered; the sequence is LYPPPVEPPK…EGSRGSLPPA (65 aa). The span at 1521 to 1531 shows a compositional bias: pro residues; the sequence is YPPPVEPPKPP. Positions 1589 to 1648 form a DNA-binding region, homeobox 1; it reads RRFSRTKFTEFQTQALQSFFETSAYPKDGEVERLASLLGLASRVVVVWFQNARQKARKNA. The C2H2-type 10; degenerate zinc-finger motif lies at 1664-1687; that stretch reads SGCRRCHATFACVFELVRHLKKCY. The disordered stretch occupies residues 1689–1760; it reads DQPPEEEEEA…EGKAPPSPPV (72 aa). The span at 1690 to 1713 shows a compositional bias: acidic residues; the sequence is QPPEEEEEAERGEEEEEVEEEEAE. Positions 1743–1752 are enriched in basic and acidic residues; the sequence is TRPESKESEG. Residues 1761–1783 form a C2H2-type 11 zinc finger; that stretch reads YACDQCAASFPSQDLLTTHHRLH. Disordered stretches follow at residues 1814–1853, 1907–1934, 1971–2057, 2114–2136, 2186–2210, 2263–2313, and 2391–2429; these read SGTSSVTGTPLKRKHDDGSLSPTGSEAGGGGEGEPPKDKR, RKGQFRSTPGGVAGPAVKPTVPPSPAPF, PLPF…DSMG, KKAKLQGTAPPGSGGSSEGTSAA, PAPETPLAPKGPPATTPASSVPLGA, QTAG…PNSS, and LQQPPQAPEPTATAPPKPPELPASGEGESSEADELLTGS. Residues 1851-1910 constitute a DNA-binding region (homeobox 2); it reads DKRLRTTILPEQLEILYRWYMQDSNPTRKMLDCISEEVGLKKRVVQVWFQNTRARERKGQ. Residues 1985-1996 are compositionally biased toward pro residues; it reads TPEPPPPLPPPA. The segment covering 2008–2037 has biased composition (low complexity); it reads KASPESEACSPSAGDLSDSSASSLAEPESP. Over residues 2038–2051 the composition is skewed to gly residues; sequence GAGGTSGGPGGGTG. A DNA-binding region (homeobox 3) is located at residues 2058–2117; that stretch reads QRRYRTQMSSLQLKIMKACYEAYRTPTMQECEVLGEEIGLPKRVIQVWFQNARAKEKKAK. Residues 2188-2200 show a composition bias toward pro residues; the sequence is PETPLAPKGPPAT. Residues 2275-2286 show a composition bias toward polar residues; that stretch reads PVSNQTNSSTDP. Basic and acidic residues predominate over residues 2295–2305; that stretch reads SGDKVSGERKP. The segment covering 2395–2411 has biased composition (pro residues); it reads PQAPEPTATAPPKPPEL. The segment at 2441 to 2461 adopts a C2H2-type 12; degenerate zinc-finger fold; it reads YLCRQCKMAFDGEAPATAHQR. The segment at 2485 to 2509 adopts a C2H2-type 13 zinc-finger fold; it reads YHCLACEVLLSGREALASHLRSSAH. Disordered stretches follow at residues 2506–2525 and 2540–2562; these read SSAHRRKAAPPPGGPPITVT and EEARLPHTDPNPKTTTTSTLLAL. Low complexity predominate over residues 2553–2562; it reads TTTTSTLLAL.

As to expression, expressed in brain (at protein level). Expressed at the highest levels in the pyramidal cell layer of the hippocampus, the suprachiasmatic nucleus, laterodorsal thalamic nucleus, lateral geniculate nucleus, substantia nigra pars compacta, and magnocellular part of the red nucleus (at protein level). Highly expressed in dorsal root ganglia. Expressed at lower levels in kidney, stomach, liver, heart and testis.

It is found in the nucleus. Its function is as follows. Transcriptional regulator that is critical for the regulation of pain perception and processing of noxious stimuli. The polypeptide is Zinc finger homeobox protein 2 (Mus musculus (Mouse)).